The following is a 504-amino-acid chain: Maturase K (504 aa).

This sequence belongs to the intron maturase 2 family. MatK subfamily.

The protein localises to the plastid. The protein resides in the chloroplast. Usually encoded in the trnK tRNA gene intron. Probably assists in splicing its own and other chloroplast group II introns. In Arabidopsis halleri, this protein is Maturase K.